Reading from the N-terminus, the 52-residue chain is Conotoxin Cal9.2b (52 aa).

Positions 1-6 (KKGVTL) are excised as a propeptide. 3 disulfides stabilise this stretch: Cys-14–Cys-31, Cys-19–Cys-41, and Cys-21–Cys-46.

As to expression, expressed by the venom duct.

It localises to the secreted. In terms of biological role, probable neurotoxin with unknown target. Possibly targets ion channels. In Californiconus californicus (California cone), this protein is Conotoxin Cal9.2b.